The chain runs to 145 residues: Brain and acute leukemia cytoplasmic protein (145 aa).

Gly2 carries the N-myristoyl glycine lipid modification. Cys3 is lipidated: S-palmitoyl cysteine. Residues 3–35 (CGGSRADAIEPRYYESWTRETESTWLTYTDSDA) form an interaction with CAMK2A region. Residues 27-119 (WLTYTDSDAP…AKRDAKRMPA (93 aa)) form a disordered region. Residues 32–46 (DSDAPPSAAAPDSGP) show a composition bias toward low complexity. Residues 83 to 108 (CETQCPNPQSLSSGPLTQKQNGLQTT) show a composition bias toward polar residues. The segment covering 109-119 (EAKRDAKRMPA) has biased composition (basic and acidic residues).

As to quaternary structure, interacts with CAMK2A. In terms of processing, palmitoylation and myristoylation target the protein to the lipid rafts. As to expression, predominantly expressed in neuroectoderm-derived tissues. Expressed in the brain and spinal cord, and at low levels, in the adrenal gland. In the bone marrow, confined to the CD34+ progenitor cells. Not found in peripheral blood mononuclear cells, nor lymph nodes. Tends to be expressed at high levels in acute myeloid leukemia and glioblastoma cells.

The protein localises to the cytoplasm. It is found in the synapse. Its subcellular location is the synaptosome. It localises to the membrane raft. The protein resides in the postsynaptic density. Functionally, may play a synaptic role at the postsynaptic lipid rafts possibly through interaction with CAMK2A. The polypeptide is Brain and acute leukemia cytoplasmic protein (Homo sapiens (Human)).